Consider the following 325-residue polypeptide: GMP reductase (325 aa).

Cysteine 174 (thioimidate intermediate) is an active-site residue. Residue 203 to 226 (LIADGGIRTHGDIAKSIRFGASMV) coordinates NADP(+).

The protein belongs to the IMPDH/GMPR family. GuaC type 2 subfamily.

The catalysed reaction is IMP + NH4(+) + NADP(+) = GMP + NADPH + 2 H(+). Functionally, catalyzes the irreversible NADPH-dependent deamination of GMP to IMP. It functions in the conversion of nucleobase, nucleoside and nucleotide derivatives of G to A nucleotides, and in maintaining the intracellular balance of A and G nucleotides. This is GMP reductase from Staphylococcus aureus (strain NCTC 8325 / PS 47).